A 497-amino-acid chain; its full sequence is Vacuolar-processing enzyme beta-isozyme 1 (497 aa).

The N-terminal stretch at 1 to 23 (MAARCWVWGFVVALLAVAAAADG) is a signal peptide. Asn-153 carries an N-linked (GlcNAc...) asparagine glycan. Residue His-180 is part of the active site. The Nucleophile role is filled by Cys-222. Residues Cys-255 and Cys-269 are joined by a disulfide bond. N-linked (GlcNAc...) asparagine glycosylation is present at Asn-340. 2 cysteine pairs are disulfide-bonded: Cys-432-Cys-462 and Cys-444-Cys-479.

It belongs to the peptidase C13 family. Post-translationally, auto-catalytic activation. Expressed in developing seeds.

The protein localises to the protein storage vacuole. The enzyme catalyses Hydrolysis of proteins and small molecule substrates at -Asn-|-Xaa- bonds.. Asparagine-specific endopeptidase that may be involved in processing of proteins targeted to vacuoles. Cysteine protease required for post-translational proteolysis of seed storage proteins in the protein storage vacuole (PSV) of developing seeds, by processing of proglutelin precursor to mature glutelin subunits, thus contributing to the formation of protein crystalline structures in PSV. The sequence is that of Vacuolar-processing enzyme beta-isozyme 1 from Oryza sativa subsp. japonica (Rice).